Here is a 258-residue protein sequence, read N- to C-terminus: Acyl-[acyl-carrier-protein]--UDP-N-acetylglucosamine O-acyltransferase (258 aa).

The protein belongs to the transferase hexapeptide repeat family. LpxA subfamily. As to quaternary structure, homotrimer.

It localises to the cytoplasm. It catalyses the reaction a (3R)-hydroxyacyl-[ACP] + UDP-N-acetyl-alpha-D-glucosamine = a UDP-3-O-[(3R)-3-hydroxyacyl]-N-acetyl-alpha-D-glucosamine + holo-[ACP]. Its pathway is glycolipid biosynthesis; lipid IV(A) biosynthesis; lipid IV(A) from (3R)-3-hydroxytetradecanoyl-[acyl-carrier-protein] and UDP-N-acetyl-alpha-D-glucosamine: step 1/6. Its function is as follows. Involved in the biosynthesis of lipid A, a phosphorylated glycolipid that anchors the lipopolysaccharide to the outer membrane of the cell. In Neisseria gonorrhoeae (strain ATCC 700825 / FA 1090), this protein is Acyl-[acyl-carrier-protein]--UDP-N-acetylglucosamine O-acyltransferase.